The following is a 218-amino-acid chain: Probable transaldolase (218 aa).

The Schiff-base intermediate with substrate role is filled by Lys84.

Belongs to the transaldolase family. Type 3B subfamily.

Its subcellular location is the cytoplasm. It carries out the reaction D-sedoheptulose 7-phosphate + D-glyceraldehyde 3-phosphate = D-erythrose 4-phosphate + beta-D-fructose 6-phosphate. Its pathway is carbohydrate degradation; pentose phosphate pathway; D-glyceraldehyde 3-phosphate and beta-D-fructose 6-phosphate from D-ribose 5-phosphate and D-xylulose 5-phosphate (non-oxidative stage): step 2/3. Its function is as follows. Transaldolase is important for the balance of metabolites in the pentose-phosphate pathway. The chain is Probable transaldolase from Bartonella henselae (strain ATCC 49882 / DSM 28221 / CCUG 30454 / Houston 1) (Rochalimaea henselae).